The primary structure comprises 79 residues: MKDLVNRSKRMSRRRLAPIRAGESIDYKNVGLLRRFISEQGKILSRRVNRLTAKQQRNMTKAIKRARILALLPFLNNEN.

Belongs to the bacterial ribosomal protein bS18 family. As to quaternary structure, part of the 30S ribosomal subunit.

The protein localises to the plastid. The protein resides in the chloroplast. The sequence is that of Small ribosomal subunit protein bS18c from Chaetosphaeridium globosum (Charophycean green alga).